Here is an 89-residue protein sequence, read N- to C-terminus: Elongation factor 1-beta (89 aa).

Belongs to the EF-1-beta/EF-1-delta family.

Its function is as follows. Promotes the exchange of GDP for GTP in EF-1-alpha/GDP, thus allowing the regeneration of EF-1-alpha/GTP that could then be used to form the ternary complex EF-1-alpha/GTP/AAtRNA. The sequence is that of Elongation factor 1-beta from Methanobrevibacter smithii (strain ATCC 35061 / DSM 861 / OCM 144 / PS).